The following is an 84-amino-acid chain: Small ribosomal subunit protein bS18 (84 aa).

The protein belongs to the bacterial ribosomal protein bS18 family. Part of the 30S ribosomal subunit. Forms a tight heterodimer with protein bS6.

In terms of biological role, binds as a heterodimer with protein bS6 to the central domain of the 16S rRNA, where it helps stabilize the platform of the 30S subunit. The sequence is that of Small ribosomal subunit protein bS18 from Vesicomyosocius okutanii subsp. Calyptogena okutanii (strain HA).